We begin with the raw amino-acid sequence, 201 residues long: Peptidyl-tRNA hydrolase (201 aa).

Tyr-15 is a binding site for tRNA. His-20 acts as the Proton acceptor in catalysis. Residues Tyr-66, Asn-68, and Asn-114 each contribute to the tRNA site.

This sequence belongs to the PTH family. As to quaternary structure, monomer.

The protein resides in the cytoplasm. It carries out the reaction an N-acyl-L-alpha-aminoacyl-tRNA + H2O = an N-acyl-L-amino acid + a tRNA + H(+). Its function is as follows. Hydrolyzes ribosome-free peptidyl-tRNAs (with 1 or more amino acids incorporated), which drop off the ribosome during protein synthesis, or as a result of ribosome stalling. In terms of biological role, catalyzes the release of premature peptidyl moieties from peptidyl-tRNA molecules trapped in stalled 50S ribosomal subunits, and thus maintains levels of free tRNAs and 50S ribosomes. The polypeptide is Peptidyl-tRNA hydrolase (Burkholderia pseudomallei (strain K96243)).